We begin with the raw amino-acid sequence, 669 residues long: DNA ligase (669 aa).

NAD(+) contacts are provided by residues 34 to 38 (DAEYD), 83 to 84 (SL), and Glu-114. Lys-116 functions as the N6-AMP-lysine intermediate in the catalytic mechanism. NAD(+)-binding residues include Arg-137, Glu-171, Lys-287, and Lys-311. Zn(2+) contacts are provided by Cys-405, Cys-408, Cys-423, and Cys-428. Residues 591–669 (NVESYFAGKT…EERFLQELNK (79 aa)) enclose the BRCT domain.

This sequence belongs to the NAD-dependent DNA ligase family. LigA subfamily. Mg(2+) is required as a cofactor. Mn(2+) serves as cofactor.

It carries out the reaction NAD(+) + (deoxyribonucleotide)n-3'-hydroxyl + 5'-phospho-(deoxyribonucleotide)m = (deoxyribonucleotide)n+m + AMP + beta-nicotinamide D-nucleotide.. DNA ligase that catalyzes the formation of phosphodiester linkages between 5'-phosphoryl and 3'-hydroxyl groups in double-stranded DNA using NAD as a coenzyme and as the energy source for the reaction. It is essential for DNA replication and repair of damaged DNA. The chain is DNA ligase from Bacillus cereus (strain ATCC 14579 / DSM 31 / CCUG 7414 / JCM 2152 / NBRC 15305 / NCIMB 9373 / NCTC 2599 / NRRL B-3711).